A 111-amino-acid polypeptide reads, in one-letter code: MNWVLVFIAGLLEVVWASSLKHADSLLDWIIIFILIAVSFILLIRSYQKIPMAAAYTVFVGIGTVGTYLTGIVLGESFSAAQMFFLALLLAGILGMKLFTKESKSQPGGEK.

Transmembrane regions (helical) follow at residues 3–23 (WVLV…LKHA), 24–44 (DSLL…ILLI), 54–74 (AAYT…GIVL), and 80–100 (AAQM…KLFT).

This sequence belongs to the drug/metabolite transporter (DMT) superfamily. Small multidrug resistance (SMR) (TC 2.A.7.1) family.

It is found in the cell membrane. This is an uncharacterized protein from Bacillus subtilis (strain 168).